A 1370-amino-acid chain; its full sequence is DNA-directed RNA polymerase subunit beta (1370 aa).

This sequence belongs to the RNA polymerase beta chain family. The RNAP catalytic core consists of 2 alpha, 1 beta, 1 beta' and 1 omega subunit. When a sigma factor is associated with the core the holoenzyme is formed, which can initiate transcription.

The catalysed reaction is RNA(n) + a ribonucleoside 5'-triphosphate = RNA(n+1) + diphosphate. Functionally, DNA-dependent RNA polymerase catalyzes the transcription of DNA into RNA using the four ribonucleoside triphosphates as substrates. This chain is DNA-directed RNA polymerase subunit beta, found in Syntrophobacter fumaroxidans (strain DSM 10017 / MPOB).